Reading from the N-terminus, the 435-residue chain is 26S proteasome regulatory subunit 7 (435 aa).

Over residues M1–N23 the composition is skewed to basic and acidic residues. Residues M1–F24 form a disordered region. G218 to T225 contacts ATP.

It belongs to the AAA ATPase family.

The protein resides in the cytoplasm. It is found in the nucleus. The 26S proteasome is involved in the ATP-dependent degradation of ubiquitinated proteins. The regulatory (or ATPase) complex confers ATP dependency and substrate specificity to the 26S complex. This Caenorhabditis elegans protein is 26S proteasome regulatory subunit 7 (rpt-1).